The chain runs to 64 residues: Alpha-mammal toxin Lqh2 (64 aa).

In terms of domain architecture, LCN-type CS-alpha/beta spans 2–64 (KDGYIVDDVN…VRTKGPGRCR (63 aa)). Disulfide bonds link Cys-12-Cys-63, Cys-16-Cys-36, Cys-22-Cys-46, and Cys-26-Cys-48. Arg-64 carries the arginine amide modification.

Belongs to the long (4 C-C) scorpion toxin superfamily. Sodium channel inhibitor family. Alpha subfamily. Expressed by the venom gland.

It is found in the secreted. Alpha toxins bind voltage-independently at site-3 of sodium channels (Nav) and inhibit the inactivation of the activated channels, thereby blocking neuronal transmission. The dissociation is voltage-dependent. Is active on mammals and competes for alpha-toxins binding on both mammalian and cockroach sodium channels. This chain is Alpha-mammal toxin Lqh2, found in Leiurus hebraeus (Hebrew deathstalker scorpion).